The following is a 223-amino-acid chain: Deoxyribose-phosphate aldolase (223 aa).

Asp-89 (proton donor/acceptor) is an active-site residue. Lys-152 functions as the Schiff-base intermediate with acetaldehyde in the catalytic mechanism. The active-site Proton donor/acceptor is the Lys-181.

Belongs to the DeoC/FbaB aldolase family. DeoC type 1 subfamily.

It localises to the cytoplasm. It carries out the reaction 2-deoxy-D-ribose 5-phosphate = D-glyceraldehyde 3-phosphate + acetaldehyde. Its pathway is carbohydrate degradation; 2-deoxy-D-ribose 1-phosphate degradation; D-glyceraldehyde 3-phosphate and acetaldehyde from 2-deoxy-alpha-D-ribose 1-phosphate: step 2/2. Catalyzes a reversible aldol reaction between acetaldehyde and D-glyceraldehyde 3-phosphate to generate 2-deoxy-D-ribose 5-phosphate. This chain is Deoxyribose-phosphate aldolase, found in Bacillus cereus (strain Q1).